A 100-amino-acid chain; its full sequence is MARKSLIQRERKRQKLEQKFHSIRRSSKKEISKVSSLSGKWEIHGKLQSPPRNSAPIRLHRRCFLTGRPRGNYRDFGLSGHILRERFHACLLPGATRSSW.

The segment at 1–54 is disordered; the sequence is MARKSLIQRERKRQKLEQKFHSIRRSSKKEISKVSSLSGKWEIHGKLQSPPRNS.

This sequence belongs to the universal ribosomal protein uS14 family. As to quaternary structure, part of the 30S ribosomal subunit.

It is found in the plastid. It localises to the chloroplast. Its function is as follows. Binds 16S rRNA, required for the assembly of 30S particles. This is Small ribosomal subunit protein uS14c from Piper cenocladum (Ant piper).